We begin with the raw amino-acid sequence, 341 residues long: MKALSKLKAEEGIWMTDVPVPELGHNDLLIKIRKTAICGTDVHIYNWDEWSQKTIPVPMVVGHEYVGEVVGIGQEVKGFKIGDRVSGEGHITCGHCRNCRGGRTHLCRNTIGVGVNRPGCFAEYLVIPAFNAFKIPDNISDDLASIFDPFGNAVHTALSFDLVGEDVLVSGAGPIGIMAAAVAKHVGARNVVITDVNEYRLELARKMGITRAVNVAKENLNDVMAELGMTEGFDVGLEMSGAPPAFRTMLDTMNHGGRIAMLGIPPSDMSIDWTKVIFKGLFIKGIYGREMFETWYKMAALIQSGLDLSPIITHRFSIDDFQKGFDAMRSGQSGKVILSWD.

Cysteine 38 serves as a coordination point for Zn(2+). Residues threonine 40 and histidine 43 each act as charge relay system in the active site. Residues histidine 63, glutamate 64, cysteine 93, cysteine 96, cysteine 99, and cysteine 107 each coordinate Zn(2+). NAD(+) is bound by residues isoleucine 175, aspartate 195, arginine 200, 262–264 (LGI), and 286–287 (IY).

This sequence belongs to the zinc-containing alcohol dehydrogenase family. Homotetramer. Zn(2+) is required as a cofactor.

The protein resides in the cytoplasm. It carries out the reaction L-threonine + NAD(+) = (2S)-2-amino-3-oxobutanoate + NADH + H(+). The protein operates within amino-acid degradation; L-threonine degradation via oxydo-reductase pathway; glycine from L-threonine: step 1/2. In terms of biological role, catalyzes the NAD(+)-dependent oxidation of L-threonine to 2-amino-3-ketobutyrate. The sequence is that of L-threonine 3-dehydrogenase from Shigella boydii serotype 4 (strain Sb227).